The primary structure comprises 367 residues: Deoxyhypusine synthase-like protein (367 aa).

The disordered stretch occupies residues 1 to 23 (MKSLFQRRASKVRETEAMNAPVP).

This sequence belongs to the deoxyhypusine synthase family.

The sequence is that of Deoxyhypusine synthase-like protein from Caulobacter vibrioides (strain ATCC 19089 / CIP 103742 / CB 15) (Caulobacter crescentus).